We begin with the raw amino-acid sequence, 156 residues long: Transmembrane protein 50 homolog (156 aa).

The next 4 helical transmembrane spans lie at 5–25 (IMKYLPALAGIIFTAGWFLWI), 45–65 (IQWIYYLPGIFATLGMVMANI), 87–107 (VWLFISFAISFGCIGAALWIM), and 124–144 (PGIAITLQTSLIFLSSLLLVF).

Belongs to the UPF0220 family.

It localises to the membrane. This Dictyostelium discoideum (Social amoeba) protein is Transmembrane protein 50 homolog (tmem50).